The following is a 159-amino-acid chain: Cytochrome c-type biogenesis protein CcmE (159 aa).

Residues 1–7 (MTRKGRR) are Cytoplasmic-facing. Residues 8–28 (LVLIGAGLGVLALAAGLILSA) form a helical; Signal-anchor for type II membrane protein membrane-spanning segment. Over 29–159 (LNDTIVFFRS…AAPVQRAPGS (131 aa)) the chain is Periplasmic. The heme site is built by His-121 and Tyr-125. Residues 134-159 (LKKQGRWQEGGPAPGTAAPVQRAPGS) are disordered.

It belongs to the CcmE/CycJ family.

It localises to the cell inner membrane. Heme chaperone required for the biogenesis of c-type cytochromes. Transiently binds heme delivered by CcmC and transfers the heme to apo-cytochromes in a process facilitated by CcmF and CcmH. This Xanthobacter autotrophicus (strain ATCC BAA-1158 / Py2) protein is Cytochrome c-type biogenesis protein CcmE.